Consider the following 275-residue polypeptide: Pyridoxal phosphate homeostasis protein (275 aa).

At Ser-6 the chain carries Phosphoserine. An N6-(pyridoxal phosphate)lysine modification is found at Lys-47. At Tyr-69 the chain carries Phosphotyrosine. Lys-125 is subject to N6-succinyllysine. Ser-226 and Ser-244 each carry phosphoserine. Positions 251–263 (DYSKKPTPDKCAA) are enriched in basic and acidic residues. Residues 251–275 (DYSKKPTPDKCAADVKAPLEVAQEH) form a disordered region.

The protein belongs to the pyridoxal phosphate-binding protein YggS/PROSC family. As to expression, ubiquitous.

Functionally, pyridoxal 5'-phosphate (PLP)-binding protein, which may be involved in intracellular homeostatic regulation of pyridoxal 5'-phosphate (PLP), the active form of vitamin B6. This is Pyridoxal phosphate homeostasis protein from Homo sapiens (Human).